Consider the following 225-residue polypeptide: NAD(P)H-quinone oxidoreductase subunit K, chloroplastic (225 aa).

Positions 43, 44, 108, and 139 each coordinate [4Fe-4S] cluster.

The protein belongs to the complex I 20 kDa subunit family. NDH is composed of at least 16 different subunits, 5 of which are encoded in the nucleus. [4Fe-4S] cluster is required as a cofactor.

The protein localises to the plastid. It localises to the chloroplast thylakoid membrane. It carries out the reaction a plastoquinone + NADH + (n+1) H(+)(in) = a plastoquinol + NAD(+) + n H(+)(out). It catalyses the reaction a plastoquinone + NADPH + (n+1) H(+)(in) = a plastoquinol + NADP(+) + n H(+)(out). In terms of biological role, NDH shuttles electrons from NAD(P)H:plastoquinone, via FMN and iron-sulfur (Fe-S) centers, to quinones in the photosynthetic chain and possibly in a chloroplast respiratory chain. The immediate electron acceptor for the enzyme in this species is believed to be plastoquinone. Couples the redox reaction to proton translocation, and thus conserves the redox energy in a proton gradient. This chain is NAD(P)H-quinone oxidoreductase subunit K, chloroplastic, found in Agrostis stolonifera (Creeping bentgrass).